We begin with the raw amino-acid sequence, 149 residues long: Transcriptional repressor NrdR (149 aa).

Residues 3-34 fold into a zinc finger; the sequence is CPFCSATDTKVIDSRLVADGHQVRRRRECVQC. The 91-residue stretch at 49–139 folds into the ATP-cone domain; that stretch reads PRVVKQDGSR…VYRAFEDVSE (91 aa).

The protein belongs to the NrdR family. The cofactor is Zn(2+).

Negatively regulates transcription of bacterial ribonucleotide reductase nrd genes and operons by binding to NrdR-boxes. The chain is Transcriptional repressor NrdR from Shewanella halifaxensis (strain HAW-EB4).